The following is a 148-amino-acid chain: Antigen GM6 (148 aa).

A disordered region spans residues 1-22; the sequence is KLKASDSRSFLDPMPEGVPLSE. A run of 2 repeats spans residues 1–68 and 69–136. Residues 137–148 form a 3; truncated repeat; sequence KLKASDSRSFQS.

The protein resides in the cytoplasm. It localises to the cytoskeleton. The polypeptide is Antigen GM6 (GM6) (Trypanosoma brucei gambiense).